The chain runs to 288 residues: 11-beta-hydroxysteroid dehydrogenase 1 (288 aa).

Residues 1 to 4 (MKKY) lie on the Cytoplasmic side of the membrane. A helical; Signal-anchor for type II membrane protein transmembrane segment spans residues 5-20 (LLPVLVLCLGYYYSTN). Topologically, residues 21 to 288 (EEFRPEMLQG…SYNRDLFVSN (268 aa)) are lumenal. NADP(+) is bound by residues 37-63 (GASK…TARS), 88-89 (TM), and 115-117 (NHI). An N-linked (GlcNAc...) asparagine glycan is attached at Asn-158. Residue Ser-166 coordinates substrate. Catalysis depends on Tyr-179, which acts as the Proton acceptor. 179 to 183 (YSASK) lines the NADP(+) pocket. Residue Asn-203 is glycosylated (N-linked (GlcNAc...) asparagine). NADP(+) is bound by residues 212–218 (GFIDTET) and 214–218 (IDTET).

This sequence belongs to the short-chain dehydrogenases/reductases (SDR) family. In terms of assembly, homodimer. Post-translationally, glycosylated. In terms of tissue distribution, liver, kidney, lung and testis. Brain. Expressed in liver (at protein level).

The protein resides in the endoplasmic reticulum membrane. It carries out the reaction an 11beta-hydroxysteroid + NADP(+) = an 11-oxosteroid + NADPH + H(+). The catalysed reaction is corticosterone + NADP(+) = 11-dehydrocorticosterone + NADPH + H(+). It catalyses the reaction a 7beta-hydroxysteroid + NADP(+) = a 7-oxosteroid + NADPH + H(+). The enzyme catalyses 7-oxocholesterol + NADPH + H(+) = 7beta-hydroxycholesterol + NADP(+). It carries out the reaction chenodeoxycholate + NADP(+) = 7-oxolithocholate + NADPH + H(+). The catalysed reaction is 7-oxolithocholate + NADPH + H(+) = ursodeoxycholate + NADP(+). It catalyses the reaction glycochenodeoxycholate + NADP(+) = 7-oxoglycolithocholate + NADPH + H(+). The enzyme catalyses taurochenodeoxycholate + NADP(+) = 7-oxotaurolithocholate + NADPH + H(+). It carries out the reaction tauroursodeoxycholate + NADP(+) = 7-oxotaurolithocholate + NADPH + H(+). The catalysed reaction is glycoursodeoxycholate + NADP(+) = 7-oxoglycolithocholate + NADPH + H(+). It catalyses the reaction 7-oxopregnenolone + NADPH + H(+) = 7beta-hydroxypregnenolone + NADP(+). The enzyme catalyses 3beta,7alpha-dihydroxyandrost-5-en-17-one + NADP(+) = 3beta-hydroxy-5-androstene-7,17-dione + NADPH + H(+). It carries out the reaction 3beta-hydroxy-5-androstene-7,17-dione + NADPH + H(+) = 3beta,7beta-dihydroxyandrost-5-en-17-one + NADP(+). The catalysed reaction is 3beta-hydroxy-5alpha-androstane-7,17-dione + NADPH + H(+) = 3beta,7beta-dihydroxy-5alpha-androstan-17-one + NADP(+). In terms of biological role, controls the reversible conversion of biologically active glucocorticoids such as 11-dehydrocorticosterone to corticosterone using NADP(H). Participates in the corticosteroid receptor-mediated anti-inflammatory response, as well as metabolic and homeostatic processes. Bidirectional in vitro, predominantly functions as a reductase in vivo, thereby increasing the concentration of active glucocorticoids. It has broad substrate specificity, besides glucocorticoids, it accepts other steroid and sterol substrates. Interconverts 7-oxo- and 7-hydroxy-neurosteroids such as 7-oxopregnenolone and 7beta-hydroxypregnenolone, 7-oxodehydroepiandrosterone (3beta-hydroxy-5-androstene-7,17-dione) and 7beta-hydroxydehydroepiandrosterone (3beta,7beta-dihydroxyandrost-5-en-17-one), among others. Catalyzes the stereo-specific conversion of the major dietary oxysterol, 7-ketocholesterol (7-oxocholesterol), into the more polar 7-beta-hydroxycholesterol metabolite. 7-oxocholesterol is one of the most important oxysterols, it participates in several events such as induction of apoptosis, accumulation in atherosclerotic lesions, lipid peroxidation, and induction of foam cell formation. Mediates the 7-oxo reduction of 7-oxolithocholate mainly to chenodeoxycholate, and to a lesser extent to ursodeoxycholate, both in its free form and when conjugated to glycine or taurine, providing a link between glucocorticoid activation and bile acid metabolism. Catalyzes the synthesis of 7-beta-25-dihydroxycholesterol from 7-oxo-25-hydroxycholesterol in vitro, which acts as a ligand for the G-protein-coupled receptor (GPCR) Epstein-Barr virus-induced gene 2 (EBI2) and may thereby regulate immune cell migration. In Rattus norvegicus (Rat), this protein is 11-beta-hydroxysteroid dehydrogenase 1.